The following is a 454-amino-acid chain: Protein odr-4 homolog (454 aa).

Transmembrane regions (helical) follow at residues 82–102 (MLPG…ELAN) and 432–452 (IGVI…FHYF).

It belongs to the ODR-4 family.

It localises to the membrane. Its function is as follows. May play a role in the trafficking of a subset of G-protein coupled receptors. This is Protein odr-4 homolog (ODR4) from Pongo abelii (Sumatran orangutan).